The chain runs to 784 residues: LPS-assembly protein LptD (784 aa).

Residues 1–24 form the signal peptide; the sequence is MKKRIPTLLATMIATALYSQQGLA. Intrachain disulfides connect C31–C724 and C173–C725.

Belongs to the LptD family. Component of the lipopolysaccharide transport and assembly complex. Interacts with LptE and LptA. Post-translationally, contains two intramolecular disulfide bonds.

It is found in the cell outer membrane. Functionally, together with LptE, is involved in the assembly of lipopolysaccharide (LPS) at the surface of the outer membrane. The polypeptide is LPS-assembly protein LptD (Escherichia coli O157:H7).